The chain runs to 218 residues: Small ribosomal subunit protein uS3 (218 aa).

Positions 38–106 (IREYISKRLQ…RVHINIVEIK (69 aa)) constitute a KH type-2 domain.

It belongs to the universal ribosomal protein uS3 family. In terms of assembly, part of the 30S ribosomal subunit. Forms a tight complex with proteins S10 and S14.

In terms of biological role, binds the lower part of the 30S subunit head. Binds mRNA in the 70S ribosome, positioning it for translation. The chain is Small ribosomal subunit protein uS3 from Geobacillus kaustophilus (strain HTA426).